We begin with the raw amino-acid sequence, 152 residues long: UPF0225 protein YchJ (152 aa).

This sequence belongs to the UPF0225 family.

This is UPF0225 protein YchJ (ychJ) from Salmonella typhimurium (strain LT2 / SGSC1412 / ATCC 700720).